A 513-amino-acid polypeptide reads, in one-letter code: uncharacterized protein (513 aa).

The region spanning 11-219 (HLEVERKFDV…SKLARVLGAT (209 aa)) is the CYTH domain. The CHAD domain maps to 228–506 (PQPPADPVHR…LEAALRKLDK (279 aa)).

This is an uncharacterized protein from Mycobacterium tuberculosis (strain CDC 1551 / Oshkosh).